Reading from the N-terminus, the 179-residue chain is ATP synthase subunit delta (179 aa).

It belongs to the ATPase delta chain family. F-type ATPases have 2 components, F(1) - the catalytic core - and F(0) - the membrane proton channel. F(1) has five subunits: alpha(3), beta(3), gamma(1), delta(1), epsilon(1). F(0) has three main subunits: a(1), b(2) and c(10-14). The alpha and beta chains form an alternating ring which encloses part of the gamma chain. F(1) is attached to F(0) by a central stalk formed by the gamma and epsilon chains, while a peripheral stalk is formed by the delta and b chains.

The protein resides in the cell membrane. In terms of biological role, f(1)F(0) ATP synthase produces ATP from ADP in the presence of a proton or sodium gradient. F-type ATPases consist of two structural domains, F(1) containing the extramembraneous catalytic core and F(0) containing the membrane proton channel, linked together by a central stalk and a peripheral stalk. During catalysis, ATP synthesis in the catalytic domain of F(1) is coupled via a rotary mechanism of the central stalk subunits to proton translocation. Functionally, this protein is part of the stalk that links CF(0) to CF(1). It either transmits conformational changes from CF(0) to CF(1) or is implicated in proton conduction. The protein is ATP synthase subunit delta of Staphylococcus carnosus (strain TM300).